Here is a 287-residue protein sequence, read N- to C-terminus: Bifunctional protein FolD (287 aa).

NADP(+) is bound by residues 166-168 and Ile-232; that span reads GAS.

The protein belongs to the tetrahydrofolate dehydrogenase/cyclohydrolase family. In terms of assembly, homodimer.

It catalyses the reaction (6R)-5,10-methylene-5,6,7,8-tetrahydrofolate + NADP(+) = (6R)-5,10-methenyltetrahydrofolate + NADPH. The enzyme catalyses (6R)-5,10-methenyltetrahydrofolate + H2O = (6R)-10-formyltetrahydrofolate + H(+). It participates in one-carbon metabolism; tetrahydrofolate interconversion. In terms of biological role, catalyzes the oxidation of 5,10-methylenetetrahydrofolate to 5,10-methenyltetrahydrofolate and then the hydrolysis of 5,10-methenyltetrahydrofolate to 10-formyltetrahydrofolate. The polypeptide is Bifunctional protein FolD (Pectobacterium atrosepticum (strain SCRI 1043 / ATCC BAA-672) (Erwinia carotovora subsp. atroseptica)).